The primary structure comprises 274 residues: Large ribosomal subunit protein uL2cz/uL2cy (274 aa).

Disordered stretches follow at residues Met1 to Gln21 and Asn224 to Lys274.

It belongs to the universal ribosomal protein uL2 family. In terms of assembly, part of the 50S ribosomal subunit.

The protein localises to the plastid. The protein resides in the chloroplast. The chain is Large ribosomal subunit protein uL2cz/uL2cy (rpl2-A) from Populus trichocarpa (Western balsam poplar).